Here is a 522-residue protein sequence, read N- to C-terminus: Gypsy retrotransposon integrase-like protein 1 (522 aa).

The Integrase catalytic domain maps to 135–292 (KVENPWSLVT…TPYFQMFSRN (158 aa)). A Phosphoserine modification is found at S502.

Widely expressed. Also found in tumors originating from parathyroid gland, colon, stomach, bladder, uterus and prostate.

This is Gypsy retrotransposon integrase-like protein 1 (GIN1) from Homo sapiens (Human).